The following is a 51-amino-acid chain: Epididymal sperm protein E (51 aa).

A zinc finger lies at 8-39 (CVRCRRKTPSFNSKTVTFRNKRRAIRSHCAYC).

In terms of tissue distribution, sperm.

The protein resides in the nucleus. The protein is Epididymal sperm protein E of Sepia officinalis (Common cuttlefish).